The primary structure comprises 537 residues: ATP-dependent 6-phosphofructokinase 5, chloroplastic (537 aa).

Residues 1–52 (MDALSQAISSGISVPYKNNSSSLVPSHGLTSLILRKSRSPVNPSSRSRVSVR) constitute a chloroplast transit peptide. Positions 35-64 (RKSRSPVNPSSRSRVSVRASEIQHSKTSAS) are disordered. Positions 39 to 54 (SPVNPSSRSRVSVRAS) are enriched in low complexity. S147 carries the post-translational modification Phosphoserine. ATP is bound by residues G189, 253 to 254 (RG), and 278 to 281 (GNGT). Mg(2+) is bound at residue N279. Substrate-binding positions include 307 to 309 (TID), 352 to 354 (MGR), E408, and 460 to 463 (YMIR). D309 functions as the Proton acceptor in the catalytic mechanism.

Belongs to the phosphofructokinase type A (PFKA) family. PPi-dependent PFK group II subfamily. Atypical ATP-dependent clade 'X' sub-subfamily. Homotetramer. It depends on Mg(2+) as a cofactor. In terms of tissue distribution, expressed in roots, leaves, stems and flowers.

It localises to the plastid. The protein localises to the chloroplast. The enzyme catalyses beta-D-fructose 6-phosphate + ATP = beta-D-fructose 1,6-bisphosphate + ADP + H(+). It participates in carbohydrate degradation; glycolysis; D-glyceraldehyde 3-phosphate and glycerone phosphate from D-glucose: step 3/4. Its activity is regulated as follows. Allosterically activated by AMP. Functionally, catalyzes the phosphorylation of D-fructose 6-phosphate to fructose 1,6-bisphosphate by ATP, the first committing step of glycolysis. This is ATP-dependent 6-phosphofructokinase 5, chloroplastic from Arabidopsis thaliana (Mouse-ear cress).